Here is a 130-residue protein sequence, read N- to C-terminus: Small ribosomal subunit protein uS11c (130 aa).

This sequence belongs to the universal ribosomal protein uS11 family. In terms of assembly, part of the 30S ribosomal subunit.

Its subcellular location is the plastid. It localises to the chloroplast. In Drimys granadensis, this protein is Small ribosomal subunit protein uS11c.